The following is a 305-amino-acid chain: Putative lipid kinase SaurJH9_0749 (305 aa).

Residues 3 to 139 (NKYTHGVLFY…YDVIKINNQY (137 aa)) form the DAGKc domain. Residues Ser44, 74–80 (GDGTVNE), and Thr101 each bind ATP. 3 residues coordinate Mg(2+): Ser220, Asp223, and Glu225. The Proton acceptor role is filled by Glu281.

Belongs to the diacylglycerol/lipid kinase family. Mg(2+) serves as cofactor.

In terms of biological role, may catalyze the ATP-dependent phosphorylation of lipids other than diacylglycerol (DAG). The sequence is that of Putative lipid kinase SaurJH9_0749 from Staphylococcus aureus (strain JH9).